A 363-amino-acid chain; its full sequence is Phosphate acyltransferase (363 aa).

The tract at residues 326–363 (ADSHPSKVNAGENAPPLASASNPSPEALPVGSLDRVEG) is disordered. Residues 337 to 354 (ENAPPLASASNPSPEALP) are compositionally biased toward low complexity.

It belongs to the PlsX family. In terms of assembly, homodimer. Probably interacts with PlsY.

It is found in the cytoplasm. It catalyses the reaction a fatty acyl-[ACP] + phosphate = an acyl phosphate + holo-[ACP]. The protein operates within lipid metabolism; phospholipid metabolism. Its function is as follows. Catalyzes the reversible formation of acyl-phosphate (acyl-PO(4)) from acyl-[acyl-carrier-protein] (acyl-ACP). This enzyme utilizes acyl-ACP as fatty acyl donor, but not acyl-CoA. The polypeptide is Phosphate acyltransferase (Synechococcus sp. (strain JA-3-3Ab) (Cyanobacteria bacterium Yellowstone A-Prime)).